The primary structure comprises 946 residues: Histone-lysine N-methyltransferase, H3 lysine-79 specific (946 aa).

Over residues 1–18 (MSEADAGARDESPSRTAE) the composition is skewed to basic and acidic residues. The tract at residues 1–28 (MSEADAGARDESPSRTAEEPAAAMRIKE) is disordered. The region spanning 54–369 (QGKTLRLPGN…KLIKYYEDQR (316 aa)) is the DOT1 domain. Residues 173–176 (YGET), 196–205 (FVDLGSGIGQ), E223, and 259–260 (DF) contribute to the S-adenosyl-L-methionine site. The segment covering 368–409 (QRRRQEVKSSREGSEISDGRDMGLKKRKSQRESSVHPDKLQK) has biased composition (basic and acidic residues). Disordered regions lie at residues 368–577 (QRRR…HGGG) and 849–905 (PTAS…GATE). Residues 410–422 (TEQAAASSHQSPK) show a composition bias toward polar residues. Basic and acidic residues predominate over residues 464–484 (GKDREKEKEKKKNKIYEEKKV). Composition is skewed to low complexity over residues 491 to 502 (KSSSSRYSSETP), 512 to 528 (NSIS…QPKA), and 855 to 864 (SKVSPSSSSS). Residues 880–903 (GAGGGGKRGTSGGRKSDGGGGGGA) show a composition bias toward gly residues.

The protein belongs to the class I-like SAM-binding methyltransferase superfamily. DOT1 family. In terms of assembly, interacts with zfp-1 (via C-terminus) to form a heterodimer known as the zfp-1-dot-1.1 complex or DotCom complex.

Its subcellular location is the nucleus. It is found in the chromosome. The enzyme catalyses L-lysyl(79)-[histone H3] + 3 S-adenosyl-L-methionine = N(6),N(6),N(6)-trimethyl-L-lysyl(79)-[histone H3] + 3 S-adenosyl-L-homocysteine + 3 H(+). Functionally, histone methyltransferase, which in complex with zfp-1, methylates 'Lys-79' of histone H3 to activate transcription. During stress, the zfp-1-dot-1.1 complex also plays a role in the deubiquitination of histone H2B sites, which negatively modulates the RNA polymerase II-induced transcription of highly expressed genes. Involved in controlling tissue-specific gene expression, particularly in the epidermis. The sequence is that of Histone-lysine N-methyltransferase, H3 lysine-79 specific from Caenorhabditis elegans.